A 484-amino-acid polypeptide reads, in one-letter code: Neuronal acetylcholine receptor subunit alpha-9 (484 aa).

A signal peptide spans 1 to 27; the sequence is MKRNNLSSFYVSLWLLFTATMLQAVES. The Extracellular portion of the chain corresponds to 28-240; that stretch reads AKGKYAQMLF…FTLILKRKSS (213 aa). N-linked (GlcNAc...) asparagine glycosylation occurs at N59. A disulfide bridge links C157 with C171. N172 carries an N-linked (GlcNAc...) asparagine glycan. Na(+)-binding residues include S193 and D195. An intrachain disulfide couples C221 to C222. Helical transmembrane passes span 241–261, 271–291, and 305–325; these read FYIFNLLLPCILISFLAPLGF, VSLGVTVLLALTVFQLMVAEI, and YIATMTMITASTALTIIIMNV. Residues 326-462 are Cytoplasmic-facing; that stretch reads HHCGSEAKPV…WKKVAKVMDR (137 aa). Residues 364 to 395 are disordered; it reads RREKEQEHRLEGGDMCRGGDGKSHLSSRNDDS. The chain crosses the membrane as a helical span at residues 463-483; it reads FFMWIFFIMVFFMSVLIIGKA.

It belongs to the ligand-gated ion channel (TC 1.A.9) family. Acetylcholine receptor (TC 1.A.9.1) subfamily. Alpha-9/CHRNA9 sub-subfamily. As to quaternary structure, forms homo- or heteropentameric channels in conjunction with CHRNA10. The native outer hair cell receptor is composed of CHRNA9:CHRNA10 heterooligomers. Found in the stoichiometric form (CHRNA9)2:(CHRNA10)3. In terms of tissue distribution, expressed in hair cells of the cochlea (at protein level). Expressed in hair cells of the cochlea.

The protein resides in the synaptic cell membrane. Its subcellular location is the cell membrane. It catalyses the reaction Ca(2+)(in) = Ca(2+)(out). The catalysed reaction is K(+)(in) = K(+)(out). The enzyme catalyses Na(+)(in) = Na(+)(out). It carries out the reaction Mg(2+)(in) = Mg(2+)(out). With respect to regulation, activated by a myriad of ligands such as acetylcholine. AChR activity is inhibited by the antagonist alpha-conotoxins RgIA and GeXXA, small disulfide-constrained peptides from cone snails. In terms of biological role, component of neuronal acetylcholine receptors (nAChRs) that function as pentameric, ligand-gated cation channels with high calcium permeability among other activities. nAChRs are excitatory neurotrasnmitter receptors formed by a collection of nAChR subunits known to mediate synaptic transmission in the nervous system and the neuromuscular junction. Each nAchR subunit confers differential attributes to channel properties, including activation, deactivation and desensitization kinetics, pH sensitivity, cation permeability, and binding to allosteric modulators. Forms either homopentamers or heteropentamers with CHRNA10. Expressed in the inner ear, in sympathetic neurons and in other non-neuronal cells, such as skin keratinocytes and lymphocytes. The channel is permeable to a range of divalent cations including calcium, the influx of which may activate a potassium current which hyperpolarizes the cell membrane. The chain is Neuronal acetylcholine receptor subunit alpha-9 (CHRNA9) from Gallus gallus (Chicken).